We begin with the raw amino-acid sequence, 276 residues long: MIDTAMARLNEGTIVIYALSVLFYFIDFLQHNRKAGKMAFWLLSIVWTLQTVYLAYFMWVTGRFPVLNVTEALYFYAWVLVTLSLVLTKLLRVDFIVFFTNVIGFSMIAIHTFSPTEQQSAAFSGQLVSELLVIHITMAILSYGAFSLSFVFSVLYMFQYHLLKKKKWGKWLLRIEDLSKLDYMAYVLNVIGVPMLLLSLILGVIWAYVSLETLYWFDAKVLGSFVVLLLYSYYLYIRLIKELQGKVAALWNTACFLVLMINYFLLGSLSQFHWFS.

8 helical membrane-spanning segments follow: residues Leu-9 to Leu-29, Phe-40 to Val-60, Val-66 to Val-86, Val-93 to Phe-113, Leu-132 to Phe-152, Val-187 to Ala-207, Phe-217 to Ile-237, and Val-247 to Gly-267.

This sequence to M.leprae U1620K.

The protein localises to the cell membrane. Functionally, required for HemL synthesis. The sequence is that of Protein HemX (hemX) from Bacillus subtilis (strain 168).